Consider the following 186-residue polypeptide: Tegument protein UL55 (186 aa).

This sequence belongs to the alphaherpesvirinae HHV-1 UL55 family.

Its subcellular location is the virion tegument. The protein resides in the host nucleus matrix. This chain is Tegument protein UL55, found in Homo sapiens (Human).